A 245-amino-acid polypeptide reads, in one-letter code: MASLALNTQADPEIELFVKAGSDGESIGNCPFCQRLFMILWLKGVKFNVTTIDTARKPEELKDLAPGTNPPFLIYNKELKTDFIKIEEFLEKTLAPPRYPHLSPKYKESFDVGCNLFAKFSAYIKNTQKEANKNFEKSLLREFKRLDDYLNTPLLDEIDPDSTEERTLSRRLFLDGDQLTLADCSLLPKLNIIKVAAKKYRDFDIPAEFSGVWRYLHNAYAREEFAHTCPEDKEIENTYASVAKQ.

Residues 1–96 (MASLALNTQA…EEFLEKTLAP (96 aa)) are required for insertion into the membrane. Glutamate 25 is a binding site for glutathione. A G-site motif is present at residues 30 to 33 (CPFC). Cysteine 30 and cysteine 33 are disulfide-bonded. The helical transmembrane segment at 32–52 (FCQRLFMILWLKGVKFNVTTI) threads the bilayer. Residues 76–239 (NKELKTDFIK…PEDKEIENTY (164 aa)) form the GST C-terminal domain. Histidine 227 serves as a coordination point for glutathione.

It belongs to the chloride channel CLIC family. Monomer. Interacts with TRAPPC2 and RYR2.

It localises to the cytoplasm. The protein resides in the membrane. The enzyme catalyses chloride(in) = chloride(out). The catalysed reaction is tert-butyl hydroperoxide + 2 glutathione = tert-butanol + glutathione disulfide + H2O. It carries out the reaction cumene hydroperoxide + 2 glutathione = 2-phenylpropan-2-ol + glutathione disulfide + H2O. In the soluble state, catalyzes glutaredoxin-like thiol disulfide exchange reactions with reduced glutathione as electron donor. Displays weak glutathione peroxidase activity. Can insert into membranes and form chloride ion channels. Membrane insertion seems to be redox-regulated and may occur only under oxidizing conditions. Modulates the activity of RYR2 and inhibits calcium influx. In Rattus norvegicus (Rat), this protein is Chloride intracellular channel protein 2.